The chain runs to 789 residues: Probable phosphoketolase 1 (789 aa).

Belongs to the XFP family. Requires thiamine diphosphate as cofactor.

This Rhizobium meliloti (strain 1021) (Ensifer meliloti) protein is Probable phosphoketolase 1.